Consider the following 256-residue polypeptide: MRIQRSLGIVLYNKNYREDDKLVKIFTEAAGKRMFFVKHIGRSKLAPVVQPLTAADFLLKINDSSLSYIEDYNQVEAYRHINEDFFRLSYASYVLALADAAIPDNEPDPQLFAFLKKTLDLIEEGLDYDILTNIFEIQILDRFGVRMNFHDCVFCHSTNLPFDFSHKYSGVLCPQHYHEDEGRYGLDPNVIYLINRFQTINIDELKTISVNADMKKKLRLFIDALYEDYVGIRLKSKVFIDDLAKWGDIMKNKQGL.

This sequence belongs to the RecO family.

Functionally, involved in DNA repair and RecF pathway recombination. The sequence is that of DNA repair protein RecO from Streptococcus equi subsp. zooepidemicus (strain MGCS10565).